A 434-amino-acid polypeptide reads, in one-letter code: Glutamyl-tRNA reductase (434 aa).

Substrate contacts are provided by residues threonine 49–arginine 52, serine 109, glutamate 114–glutamine 116, and glutamine 120. Cysteine 50 acts as the Nucleophile in catalysis. Glycine 189 to cysteine 194 provides a ligand contact to NADP(+).

This sequence belongs to the glutamyl-tRNA reductase family. In terms of assembly, homodimer.

It carries out the reaction (S)-4-amino-5-oxopentanoate + tRNA(Glu) + NADP(+) = L-glutamyl-tRNA(Glu) + NADPH + H(+). It participates in porphyrin-containing compound metabolism; protoporphyrin-IX biosynthesis; 5-aminolevulinate from L-glutamyl-tRNA(Glu): step 1/2. Catalyzes the NADPH-dependent reduction of glutamyl-tRNA(Glu) to glutamate 1-semialdehyde (GSA). The protein is Glutamyl-tRNA reductase of Geotalea uraniireducens (strain Rf4) (Geobacter uraniireducens).